The primary structure comprises 485 residues: Cobyric acid synthase (485 aa).

The region spanning 249 to 437 (HLKIRVPVWQ…WHGLFSQPSA (189 aa)) is the GATase cobBQ-type domain. The active-site Nucleophile is Cys-330. Residue His-429 is part of the active site.

This sequence belongs to the CobB/CobQ family. CobQ subfamily.

Its pathway is cofactor biosynthesis; adenosylcobalamin biosynthesis. In terms of biological role, catalyzes amidations at positions B, D, E, and G on adenosylcobyrinic A,C-diamide. NH(2) groups are provided by glutamine, and one molecule of ATP is hydrogenolyzed for each amidation. This chain is Cobyric acid synthase, found in Saccharophagus degradans (strain 2-40 / ATCC 43961 / DSM 17024).